The chain runs to 254 residues: Transmembrane protein 70, mitochondrial (254 aa).

Residues Met1–Cys78 constitute a mitochondrion transit peptide. The Mitochondrial matrix portion of the chain corresponds to Ser79–Ser112. Residues Leu113–Leu133 form a helical membrane-spanning segment. Topologically, residues Pro134–Gln136 are mitochondrial intermembrane. A helical membrane pass occupies residues Ile137 to Leu157. Residues Thr158–Lys254 lie on the Mitochondrial matrix side of the membrane.

The protein belongs to the TMEM70 family. Homooligomer. Interacts (homooligomer form) with ATP5MC1; this interaction facilitates the oligomer formation of subunit c/ATP5MC1 (c-ring) and the c-ring membrane insertion and also protects ATP5MC1 against intramitochondrial proteolysis. Interacts with the core subunits TMEM126B, NDUFAF1, ECSIT and ACAD9 of the MCIA complex. Interacts with ATP5MC3, TMEM242 and TIMMDC1.

Its subcellular location is the mitochondrion inner membrane. In terms of biological role, scaffold protein that participates in the c-ring assembly of mitochondrial ATP synthase (F(1)F(0) ATP synthase or complex V) by facilitating the membrane insertion and oligomer formation of the subunit c/ATP5MC1 through its interaction. Therefore, participates in the early stage of mitochondrial ATP synthase biogenesis and also protects subunit c/ATP5MC1 against intramitochondrial proteolysis. In addition, binds the mitochondrial proton-transporting ATP synthase complexes I and may play a role in the stability of its membrane-bound subassemblies. The polypeptide is Transmembrane protein 70, mitochondrial (Bos taurus (Bovine)).